Consider the following 62-residue polypeptide: Large ribosomal subunit protein uL29 (62 aa).

This sequence belongs to the universal ribosomal protein uL29 family.

In Vesicomyosocius okutanii subsp. Calyptogena okutanii (strain HA), this protein is Large ribosomal subunit protein uL29.